Consider the following 584-residue polypeptide: 2-succinyl-5-enolpyruvyl-6-hydroxy-3-cyclohexene-1-carboxylate synthase (584 aa).

It belongs to the TPP enzyme family. MenD subfamily. As to quaternary structure, homodimer. Requires Mg(2+) as cofactor. Mn(2+) is required as a cofactor. Thiamine diphosphate serves as cofactor.

It carries out the reaction isochorismate + 2-oxoglutarate + H(+) = 5-enolpyruvoyl-6-hydroxy-2-succinyl-cyclohex-3-ene-1-carboxylate + CO2. Its pathway is quinol/quinone metabolism; 1,4-dihydroxy-2-naphthoate biosynthesis; 1,4-dihydroxy-2-naphthoate from chorismate: step 2/7. It functions in the pathway quinol/quinone metabolism; menaquinone biosynthesis. In terms of biological role, catalyzes the thiamine diphosphate-dependent decarboxylation of 2-oxoglutarate and the subsequent addition of the resulting succinic semialdehyde-thiamine pyrophosphate anion to isochorismate to yield 2-succinyl-5-enolpyruvyl-6-hydroxy-3-cyclohexene-1-carboxylate (SEPHCHC). In Bacillus cereus (strain ATCC 14579 / DSM 31 / CCUG 7414 / JCM 2152 / NBRC 15305 / NCIMB 9373 / NCTC 2599 / NRRL B-3711), this protein is 2-succinyl-5-enolpyruvyl-6-hydroxy-3-cyclohexene-1-carboxylate synthase.